Consider the following 473-residue polypeptide: FAD-dependent oxidoreductase dpchF (473 aa).

An N-terminal signal peptide occupies residues 1 to 21 (MKLSFIASPVWALALAQFAAA). N-linked (GlcNAc...) asparagine glycans are attached at residues Asn98, Asn128, Asn181, Asn262, and Asn330.

The protein belongs to the beta-cyclopiazonate dehydrogenase family. Requires FAD as cofactor.

The protein operates within secondary metabolite biosynthesis; terpenoid biosynthesis. In terms of biological role, FAD-dependent oxidoreductase; part of the gene cluster that mediates the biosynthesis of the diterpenoid pyrones higginsianins A and B. The first step of the pathway is the synthesis of the alpha-pyrone moiety by the polyketide synthase dpchA via condensation of one acetyl-CoA starter unit with 3 malonyl-CoA units and 2 methylations. The alpha-pyrone is then combined with geranylgeranyl pyrophosphate (GGPP) formed by the GGPP synthase dpchD through the action of the prenyltransferase dpchC to yield a linear alpha-pyrone diterpenoid. Subsequent steps in the diterpenoid pyrone biosynthetic pathway involve the decalin core formation, which is initiated by the epoxidation of the C10-C11 olefin by the FAD-dependent oxidoreductase dpchE, and is followed by a cyclization cascade catalyzed by the terpene cyclase dpchB. The short chain dehydrogenase/reductase dpchG then oxidizes the 8S hydroxy group to a ketone and the short chain dehydrogenase/reductase dpchH reduces the ketone to the 8R hydroxy group to yield higginsianin B. Finally, the FAD-dependent oxidoreductase dpchF converts higginsianin B into higginsianin A. The polypeptide is FAD-dependent oxidoreductase dpchF (Colletotrichum higginsianum (strain IMI 349063) (Crucifer anthracnose fungus)).